Reading from the N-terminus, the 235-residue chain is Small ribosomal subunit protein uS3 (235 aa).

Residues 39 to 107 (VRQFLNKELA…PAQINIAEVK (69 aa)) form the KH type-2 domain. Residues 216–235 (QPEQQPTDKPKKVPRGKGRK) form a disordered region.

Belongs to the universal ribosomal protein uS3 family. Part of the 30S ribosomal subunit. Forms a tight complex with proteins S10 and S14.

Binds the lower part of the 30S subunit head. Binds mRNA in the 70S ribosome, positioning it for translation. The polypeptide is Small ribosomal subunit protein uS3 (Aggregatibacter actinomycetemcomitans (Actinobacillus actinomycetemcomitans)).